We begin with the raw amino-acid sequence, 437 residues long: Protein farnesyltransferase subunit beta (437 aa).

5 PFTB repeats span residues 123–164 (ATDV…CIIG), 174–215 (REKL…SLTN), 222–263 (FEGT…VILK), 270–312 (LKSL…PLLH), and 332–374 (QQAL…SIAQ). Residues 248–251 (HGGY) and 291–294 (RCNK) each bind (2E,6E)-farnesyl diphosphate. Residues D297 and C299 each contribute to the Zn(2+) site. Position 300-303 (300-303 (YSFW)) interacts with (2E,6E)-farnesyl diphosphate. Residue H362 participates in Zn(2+) binding. T436 bears the Phosphothreonine mark.

The protein belongs to the protein prenyltransferase subunit beta family. Heterodimer of FNTA and FNTB. Zn(2+) is required as a cofactor.

The enzyme catalyses L-cysteinyl-[protein] + (2E,6E)-farnesyl diphosphate = S-(2E,6E)-farnesyl-L-cysteinyl-[protein] + diphosphate. Essential subunit of the farnesyltransferase complex. Catalyzes the transfer of a farnesyl moiety from farnesyl diphosphate to a cysteine at the fourth position from the C-terminus of several proteins having the C-terminal sequence Cys-aliphatic-aliphatic-X. This Homo sapiens (Human) protein is Protein farnesyltransferase subunit beta (FNTB).